Reading from the N-terminus, the 292-residue chain is Pyruvate formate-lyase 2-activating enzyme (292 aa).

The region spanning 33–287 is the Radical SAM core domain; sequence NDGEGIRTVV…REMAERAGLQ (255 aa). Positions 47, 51, and 54 each coordinate [4Fe-4S] cluster. An S-adenosyl-L-methionine-binding site is contributed by 53 to 55; the sequence is WCA. The 4Fe-4S ferredoxin-type domain occupies 62–96; the sequence is GKIQTVRREAKCLHCAKCLRDADECPSGAFERIGR. Residues glycine 126, 175-177, and histidine 247 contribute to the S-adenosyl-L-methionine site; that span reads DLK.

Belongs to the organic radical-activating enzymes family. Requires [4Fe-4S] cluster as cofactor.

It is found in the cytoplasm. It carries out the reaction glycyl-[formate C-acetyltransferase] + reduced [flavodoxin] + S-adenosyl-L-methionine = glycin-2-yl radical-[formate C-acetyltransferase] + semiquinone [flavodoxin] + 5'-deoxyadenosine + L-methionine + H(+). Functionally, activation of pyruvate formate-lyase 2 under anaerobic conditions by generation of an organic free radical, using S-adenosylmethionine and reduced flavodoxin as cosubstrates to produce 5'-deoxy-adenosine. In Escherichia coli (strain K12), this protein is Pyruvate formate-lyase 2-activating enzyme (pflC).